A 396-amino-acid chain; its full sequence is Unsaturated chondroitin disaccharide hydrolase (396 aa).

Residue aspartate 113 is the Nucleophile of the active site. Residues aspartate 113, aspartate 173, glycine 231, threonine 233, arginine 245, tryptophan 249, serine 363, and serine 366 each coordinate substrate. The active-site Proton donor is aspartate 173.

It belongs to the glycosyl hydrolase 88 family. In terms of assembly, monomer.

It carries out the reaction beta-D-4-deoxy-Delta(4)-GlcpA-(1-&gt;3)-beta-D-GalpNAc6S + H2O = N-acetyl-beta-D-galactosamine 6-sulfate + 5-dehydro-4-deoxy-D-glucuronate. In terms of biological role, catalyzes the hydrolysis of unsaturated hyaluronate and chondroitin disaccharides. Also degrades unsaturated heparin disaccharides. Releases 4-deoxy-4,5-didehydro D-glucuronic acid or 4-deoxy-4,5-didehydro L-iduronic acid from chondroitin disaccharides, hyaluronan disaccharides and heparin disaccharides and cleaves both glycosidic (1-&gt;3) and (1-&gt;4) bonds. Prefers sulfated glycosaminoglycans compared to unsulfated glycosaminoglycans. Probably required for mammalian cells invasion through the degradation of extracellular sulfated glycosaminoglycans such as chondroitin and hyaluronan. The chain is Unsaturated chondroitin disaccharide hydrolase (ugl) from Streptococcus pneumoniae (strain ATCC BAA-255 / R6).